The chain runs to 243 residues: NH(3)-dependent NAD(+) synthetase (243 aa).

Gly-31–Ser-38 is an ATP binding site. Mg(2+) is bound at residue Asp-37. Arg-110 lines the deamido-NAD(+) pocket. An ATP-binding site is contributed by Thr-130. Residue Glu-135 coordinates Mg(2+). Positions 143 and 150 each coordinate deamido-NAD(+). Positions 159 and 181 each coordinate ATP. His-227–Lys-228 is a deamido-NAD(+) binding site.

The protein belongs to the NAD synthetase family. Homodimer.

It catalyses the reaction deamido-NAD(+) + NH4(+) + ATP = AMP + diphosphate + NAD(+) + H(+). It functions in the pathway cofactor biosynthesis; NAD(+) biosynthesis; NAD(+) from deamido-NAD(+) (ammonia route): step 1/1. Catalyzes the ATP-dependent amidation of deamido-NAD to form NAD. Uses ammonia as a nitrogen source. The polypeptide is NH(3)-dependent NAD(+) synthetase (Malacoplasma penetrans (strain HF-2) (Mycoplasma penetrans)).